Consider the following 306-residue polypeptide: Serine/threonine-protein phosphatase PP-X homolog 4 (306 aa).

Asp53, His55, Asp81, and Asn113 together coordinate Mn(2+). His114 serves as the catalytic Proton donor. Residues His163 and His237 each contribute to the Mn(2+) site.

Belongs to the PPP phosphatase family. PP-4 (PP-X) subfamily. The cofactor is Mn(2+).

It catalyses the reaction O-phospho-L-seryl-[protein] + H2O = L-seryl-[protein] + phosphate. The catalysed reaction is O-phospho-L-threonyl-[protein] + H2O = L-threonyl-[protein] + phosphate. This chain is Serine/threonine-protein phosphatase PP-X homolog 4 (Ppx4), found in Paramecium tetraurelia.